We begin with the raw amino-acid sequence, 250 residues long: Sulfate transporter CysZ (250 aa).

The next 4 helical transmembrane spans lie at 26–46, 71–91, 150–170, and 211–231; these read LFVLLPLAINLVLFVGLIYLA, ILWPLFVVLVALMVFFTFTML, LFILSFIPVVNIVAAPLWLLF, and IVYLVLLIPVVNILMMPAAVA.

Belongs to the CysZ family.

It is found in the cell inner membrane. Its function is as follows. High affinity, high specificity proton-dependent sulfate transporter, which mediates sulfate uptake. Provides the sulfur source for the cysteine synthesis pathway. This is Sulfate transporter CysZ from Pseudomonas fluorescens (strain Pf0-1).